The sequence spans 242 residues: DNA repair protein RecO (242 aa).

The protein belongs to the RecO family. In terms of assembly, monomer.

Involved in DNA repair and RecF pathway recombination. The polypeptide is DNA repair protein RecO (Salmonella enteritidis PT4 (strain P125109)).